Reading from the N-terminus, the 376-residue chain is MASSEQAEQPNQPSSPPGSENVVPREPLIATAVKFLQNSRVRQSPLATRRAFLKKKGLTDEEIDLAFQQSGTAADEPSPLGPATPVVPVQPPHLTPQPYSPRGSRWRDYGALAIIMAGIAFGFHQLYKRYLLPLILGGREDRKQLERMAASLSELSGTVAQTVTQVQTTLASVQELLRQQQQKVQELAHELATAKATTSTNWILESQNINELKSEINSLKGLLLNRRQFPPSPSAPKIPSWQIPVKSSSPSSPAAVNHHSSSDISPVSNESTSSSPGKDSHSPEGSTATYHLLGPQEEGEGVLDVKGQVRMEVQGEEEKREDKEDEDDEDDDVSHVDEEDVLGVQREDRRGGDGQINEQVEKLRRPEGASNETERD.

Polar residues predominate over residues 1 to 12 (MASSEQAEQPNQ). The interval 1-24 (MASSEQAEQPNQPSSPPGSENVVP) is disordered. Alanine 2 carries the N-acetylalanine modification. Residues 2–108 (ASSEQAEQPN…YSPRGSRWRD (107 aa)) lie on the Peroxisomal side of the membrane. An N6-acetyllysine modification is found at lysine 34. Positions 70–102 (SGTAADEPSPLGPATPVVPVQPPHLTPQPYSPR) are disordered. Over residues 88–99 (PVQPPHLTPQPY) the composition is skewed to pro residues. A helical membrane pass occupies residues 109-127 (YGALAIIMAGIAFGFHQLY). The Cytoplasmic portion of the chain corresponds to 128–376 (KRYLLPLILG…EGASNETERD (249 aa)). Residues 230–376 (PPSPSAPKIP…EGASNETERD (147 aa)) are disordered. At serine 232 the chain carries Phosphoserine. 2 stretches are compositionally biased toward low complexity: residues 247-259 (SSSP…VNHH) and 265-275 (SPVSNESTSSS). 2 positions are modified to phosphoserine: serine 282 and serine 334. Over residues 323–341 (KEDEDDEDDDVSHVDEEDV) the composition is skewed to acidic residues. Positions 359-376 (QVEKLRRPEGASNETERD) are enriched in basic and acidic residues.

This sequence belongs to the peroxin-14 family. Interacts with PEX13; forming the PEX13-PEX14 docking complex. Interacts with PEX5 (via WxxxF/Y motifs). Interacts with PEX19. Interacts with tubulin.

The protein localises to the peroxisome membrane. In terms of biological role, component of the PEX13-PEX14 docking complex, a translocon channel that specifically mediates the import of peroxisomal cargo proteins bound to PEX5 receptor. The PEX13-PEX14 docking complex forms a large import pore which can be opened to a diameter of about 9 nm. Mechanistically, PEX5 receptor along with cargo proteins associates with the PEX14 subunit of the PEX13-PEX14 docking complex in the cytosol, leading to the insertion of the receptor into the organelle membrane with the concomitant translocation of the cargo into the peroxisome matrix. Plays a key role for peroxisome movement through a direct interaction with tubulin. This Mus musculus (Mouse) protein is Peroxisomal membrane protein PEX14.